The chain runs to 303 residues: Thyrotroph embryonic factor (303 aa).

2 disordered regions span residues 1 to 63 and 132 to 176; these read MSDA…KLEE and ESAS…DPNC. Serine 32 is modified (phosphoserine). Over residues 41–61 the composition is skewed to basic and acidic residues; it reads KLMENPPREARLDKEKGKEKL. The segment covering 133 to 160 has biased composition (low complexity); sequence SASSSTASPPSSSTAIFQPSETVSSTES. Positions 233–296 constitute a bZIP domain; the sequence is DEKYWTRRKK…GKCKTIVSKY (64 aa). A basic motif region spans residues 235-255; it reads KYWTRRKKNNVAAKRSRDARR. Residues 256–263 form a leucine-zipper region; it reads LKENQITI.

The protein belongs to the bZIP family. PAR subfamily. As to quaternary structure, binds DNA as a homodimer or a heterodimer. Can form a heterodimer with DBP.

Its subcellular location is the nucleus. In terms of biological role, transcription factor that binds to and transactivates the TSHB promoter. Binds to a minimal DNA-binding sequence 5'-[TC][AG][AG]TTA[TC][AG]-3'. This is Thyrotroph embryonic factor (TEF) from Homo sapiens (Human).